We begin with the raw amino-acid sequence, 260 residues long: Carbonic anhydrase 3 (260 aa).

Ala2 carries the N-acetylalanine modification. The 257-residue stretch at Lys3–Phe259 folds into the Alpha-carbonic anhydrase domain. A phosphoserine mark is found at Ser29, Ser43, Ser48, Ser50, and Ser55. Residues Lys64–Arg67 form an involved in proton transfer region. Thr73 carries the post-translational modification Phosphothreonine. Zn(2+) contacts are provided by His94, His96, and His119. Tyr127 carries the post-translational modification Phosphotyrosine. Thr129 carries the post-translational modification Phosphothreonine. 2 positions are modified to S-glutathionyl cysteine: Cys182 and Cys187. Thr198–Thr199 contributes to the substrate binding site. The residue at position 216 (Thr216) is a Phosphothreonine. Ser219 is modified (phosphoserine).

The protein belongs to the alpha-carbonic anhydrase family. It depends on Zn(2+) as a cofactor. S-thiolated both by thiol-disulfide exchange with glutathione disulfide and by oxyradical-initiated S-thiolation with reduced glutathione. In terms of processing, S-glutathionylated in hepatocytes under oxidative stress. As to expression, expressed in liver and muscle.

The protein localises to the cytoplasm. It carries out the reaction hydrogencarbonate + H(+) = CO2 + H2O. With respect to regulation, inhibited by acetazolamide. In terms of biological role, reversible hydration of carbon dioxide. The sequence is that of Carbonic anhydrase 3 (Ca3) from Rattus norvegicus (Rat).